Consider the following 152-residue polypeptide: UPF0266 membrane protein YobD (152 aa).

A run of 3 helical transmembrane segments spans residues 6–26 (LVLILFIAVLLAFAIYDQFIM), 45–65 (IDSVIFVGLIVILIYNSVTNH), and 67–87 (ALITTWLLSALALMGFYIFWI).

Belongs to the UPF0266 family.

It is found in the cell inner membrane. In Escherichia coli O127:H6 (strain E2348/69 / EPEC), this protein is UPF0266 membrane protein YobD.